A 196-amino-acid chain; its full sequence is Proteasome subunit beta 2 (196 aa).

A propeptide spans 1-6 (MEELPS) (removed in mature form; by autocatalysis). Thr-7 (nucleophile) is an active-site residue.

This sequence belongs to the peptidase T1B family. The 20S proteasome core is composed of 14 alpha and 14 beta subunits that assemble into four stacked heptameric rings, resulting in a barrel-shaped structure. The two inner rings, each composed of seven catalytic beta subunits, are sandwiched by two outer rings, each composed of seven alpha subunits. The catalytic chamber with the active sites is on the inside of the barrel. Has a gated structure, the ends of the cylinder being occluded by the N-termini of the alpha-subunits. Is capped at one or both ends by the proteasome regulatory ATPase, PAN.

It localises to the cytoplasm. The catalysed reaction is Cleavage of peptide bonds with very broad specificity.. The formation of the proteasomal ATPase PAN-20S proteasome complex, via the docking of the C-termini of PAN into the intersubunit pockets in the alpha-rings, triggers opening of the gate for substrate entry. Interconversion between the open-gate and close-gate conformations leads to a dynamic regulation of the 20S proteasome proteolysis activity. Functionally, component of the proteasome core, a large protease complex with broad specificity involved in protein degradation. The sequence is that of Proteasome subunit beta 2 from Metallosphaera sedula (strain ATCC 51363 / DSM 5348 / JCM 9185 / NBRC 15509 / TH2).